We begin with the raw amino-acid sequence, 413 residues long: Cell surface GPI-anchored protein ECM33 (413 aa).

An N-terminal signal peptide occupies residues 1–20; sequence MQIKSFLLPIVAALLTSVSA. N-linked (GlcNAc...) asparagine glycans are attached at residues Asn93, Asn102, Asn172, Asn209, Asn222, Asn227, Asn279, Asn290, Asn306, Asn322, and Asn382. Positions 347–390 are disordered; sequence YVCTHPANPSSSSKSGSSTQTGKSDSKSSDGSSSSNSSSSSKKG. A compositionally biased stretch (low complexity) spans 356 to 390; that stretch reads SSSSKSGSSTQTGKSDSKSSDGSSSSNSSSSSKKG. A lipid anchor (GPI-anchor amidated glycine) is attached at Gly390. The propeptide at 391–413 is removed in mature form; that stretch reads ASNVLVVPGMVLTTALGVLLALI.

It belongs to the SPS2 family.

The protein localises to the cell membrane. It localises to the secreted. It is found in the cell wall. Functionally, cell surface protein required for proper cell wall integrity and for the correct assembly of the mannoprotein outer layer of the cell wall. The polypeptide is Cell surface GPI-anchored protein ECM33 (ECM331) (Candida albicans (strain SC5314 / ATCC MYA-2876) (Yeast)).